A 207-amino-acid polypeptide reads, in one-letter code: Tereporin-Ts1 (207 aa).

The first 11 residues, 1 to 11 (VIFALVLGNAS), serve as a signal peptide directing secretion. The interval 35 to 54 (SAGTSLASTILSGLAASGYR) is N-terminal region. Phosphocholine is bound by residues G111, S129, P131, Y164, and Y165.

The protein belongs to the actinoporin family. Conoidea subfamily. Octamer or nonamer in membranes. Monomer in the soluble state. In terms of tissue distribution, expressed by the venom duct.

It localises to the secreted. Its subcellular location is the nematocyst. The protein resides in the target cell membrane. In terms of biological role, pore-forming protein that forms pores of around 1 nm and causes cardiac stimulation and cytolysis. The chain is Tereporin-Ts1 from Terebra subulata (Chocolate spotted auger).